The chain runs to 373 residues: Chaperone protein DnaJ (373 aa).

The J domain occupies 5–70 (DFYATLGVAR…EKRAMYDQYG (66 aa)). The segment at 134 to 212 (GVKKRINIPT…CRGVGRNKAV (79 aa)) adopts a CR-type zinc-finger fold. Cys-147, Cys-150, Cys-164, Cys-167, Cys-186, Cys-189, Cys-200, and Cys-203 together coordinate Zn(2+). 4 CXXCXGXG motif repeats span residues 147-154 (CDVCNGSG), 164-171 (CPTCKGSG), 186-193 (CPTCRGAG), and 200-207 (CVKCRGVG).

It belongs to the DnaJ family. As to quaternary structure, homodimer. It depends on Zn(2+) as a cofactor.

Its subcellular location is the cytoplasm. In terms of biological role, participates actively in the response to hyperosmotic and heat shock by preventing the aggregation of stress-denatured proteins and by disaggregating proteins, also in an autonomous, DnaK-independent fashion. Unfolded proteins bind initially to DnaJ; upon interaction with the DnaJ-bound protein, DnaK hydrolyzes its bound ATP, resulting in the formation of a stable complex. GrpE releases ADP from DnaK; ATP binding to DnaK triggers the release of the substrate protein, thus completing the reaction cycle. Several rounds of ATP-dependent interactions between DnaJ, DnaK and GrpE are required for fully efficient folding. Also involved, together with DnaK and GrpE, in the DNA replication of plasmids through activation of initiation proteins. This chain is Chaperone protein DnaJ, found in Neisseria gonorrhoeae (strain ATCC 700825 / FA 1090).